Reading from the N-terminus, the 2084-residue chain is MAYFLPSFFQKRLLRYALSRLELVDTEALDLDSLGIRWGQRSTVELRDIGLRLETRRAETHDATTDQKTSGRVDPGSGDEPILPNPTDLAESFLQAEPKEEKEELQAAISSQSQVLQHTSTSSSDDEEELGLGNETVSLPSFVAAFLKGVVDRLQVQVDDISIRVDVETKQEGSSKRHPEEKPDLITGLLSVRQVSMGAVSTHSESGEASSSERRRLVSLSDINLALISEPVVFSNYSRFAAPASPSTPVQPKSSRPPSRAQSPSPETSSESSLALAMTRSTIFEPPQDLTRQELEEQHTPRLEGSVYTYDGRFSDADTEDGKRSYGSLEDSRQFEDDEKLLDNPAYLDSVIDYQFQDDDPERLDDMQTRVDGLFRRSRDTPRSQSPEHTAELTDQNSHPEGALIPLNDRHELEVARLPSHQHFLEAPEAITEPGSSGLTPEKDFRPGYKQQLPLVCAPSSEPDSSGSASESFKESELSESRLFSNEEAQSMYMSAISQGSTSHSFMPNIPGAWDSPESTYVRDTGFHETPTAMEQDAYSEQDETITTPKLTAQEGIYLSHASSIDNLQKTTTGTTGRESIQTSPGFNRLTDVAKRFVSVDKVLIWIPSVNHEKVPGDSQSASHQEMSSDGLKDSTAYLQDSVIDDDLLASRIHGFPGPRSGANDPSSPHEGVDHKASGYQEKTKHDAGFSSERDEATVEIHSAEVQFDIAIGWLVIKIGKRIVNAFGHGDGEPPKKHNSESKAPEQVQPKESFGLILNKFSIKFVEHVPGHANPFGESRQYSPTFFGLMHEDIVLQTTASGLKAHFSSTNDQTKLRLDITKFTLGVASEDLISFNQDLKMRESMRDVLSPMHGDISLSMSKSLESARIHVTTLPLHLNLNIQRLEEVVGWIGGLSTILELGSSISSASGAKTPKKDPPKRPRGVHFEAPPSPEKLPQDTSLPWKVNARIGGVALNIVGESHYLKLRTTAVKVVSRFEGVGVQIDKAKLSGPLPLDDSKDAPAKINLSNIRIEYLFAPKEVDLDRLLSLITPSKDKYDEDDDIMLDTLFRQRRQGSVLRTTIAGADIMISRITDFDSLPQLGDELSRLSNVAKYLPEDDRPGLLTLNLIRDFEARVNVGGKVGDITARLKNAEVAYISIPSLVAAQVGSATVLRNGTEELLGEALPLSAEQRSGQIPHPMLMARFIADEMEPTIKVKMHNLRAEYTVPAAIAFLGLNESSTTSDFAANMAQSIGNLAELQPSKESQSAIKPGSPKSPVRPTILALALRDCVIGLNPRGSEAKGLVVLTNANFSGAMDDGASSEATLDLRKASIMIIDDVRNMGSTDDSHRRNSTAPPTNQVQSFIDMGFVTVSSISSATASVKLLRSGEDGTQSLDVELRDDLLILETCADSTQTLISIVNGLQPPTPPSVTKKYRTEVLPLQDMLASFSGDAFALNSSSSLEGVSETAGDSAENIQDKEGHIEDEVEYVSDFYPAKPTSGGGSLHEAMTASGSNELLDSFHSQYYVSSSISDLEFRDDHFATQSAVGGTAHRWDSTENTYGLSDDTKLQKSPLRIRVRDAHVIWNLFDGYDWQRTRDTISKAVKDVERKATDRRARANRASPSFDEDEESVIGDCLFNSIYIGIPANKDPRELRSDINRNIDDLVSETGSYATTTTVTGATVRQSQSPSFRKKLRLSRSKYHKMTFELKGICADLVVFPPDSGETQSSLDVRVNDLEIFDHVPTSTWKKFATYMHEVGEKESGTSMVHLEILTVRPVPELAASEIVLKATLLPLRLHVDQDALDFLCRFFEFRDDSAPASSAPQDIPFLQRVEINAVPVKLDFKPKRVDYTGLRSGRTTEFMNFFVLDGADMVMRHVIIYGVSGFDKLGQTLNDIWMPDIKRNQLPGVLAGLAPIRSLVNVGGGVKDLVVVPMREYRKDGRIVRSIQKGALAFAKTTSNELVKLGAKLAIGTQTVLQGAEDLLTSPNTQLAGAEEELGDEEEAKKISLYADQPVGVVQGLRGAFRGLERDLLLTRDAIVAVPGEVVESGSAKAAAKAVWKRAPTVILRPAIGVSKAVGQTLLGAGNTLDPSNRRKMEDKYKRH.

Residues 57–71 are compositionally biased toward basic and acidic residues; that stretch reads RAETHDATTDQKTSG. 10 disordered regions span residues 57-87, 100-131, 242-334, 372-404, 425-482, 613-633, 653-693, 728-749, 907-940, and 2065-2084; these read RAET…PNPT, EEKE…EELG, APAS…DSRQ, DGLF…EGAL, LEAP…SESR, EKVP…DGLK, IHGF…FSSE, GHGD…EQVQ, SASG…PQDT, and AGNT…YKRH. Residues 108–118 show a composition bias toward polar residues; it reads AISSQSQVLQH. The span at 251 to 279 shows a compositional bias: low complexity; it reads QPKSSRPPSRAQSPSPETSSESSLALAMT. Composition is skewed to basic and acidic residues over residues 291–302, 313–334, and 372–382; these read TRQELEEQHTPR, RFSD…DSRQ, and DGLFRRSRDTP. Residues 383 to 399 are compositionally biased toward polar residues; sequence RSQSPEHTAELTDQNSH. Over residues 458-471 the composition is skewed to low complexity; that stretch reads APSSEPDSSGSASE. The segment covering 618–628 has biased composition (polar residues); sequence DSQSASHQEMS. Composition is skewed to basic and acidic residues over residues 671–693 and 730–744; these read EGVD…FSSE and GDGE…ESKA. Residues 2072-2084 show a composition bias toward basic and acidic residues; sequence SNRRKMEDKYKRH.

The protein belongs to the ATG2 family.

The protein localises to the preautophagosomal structure membrane. It is found in the endoplasmic reticulum membrane. The catalysed reaction is a 1,2-diacyl-sn-glycero-3-phosphocholine(in) = a 1,2-diacyl-sn-glycero-3-phosphocholine(out). It carries out the reaction a 1,2-diacyl-sn-glycero-3-phospho-L-serine(in) = a 1,2-diacyl-sn-glycero-3-phospho-L-serine(out). The enzyme catalyses a 1,2-diacyl-sn-glycero-3-phosphoethanolamine(in) = a 1,2-diacyl-sn-glycero-3-phosphoethanolamine(out). Functionally, lipid transfer protein required for autophagosome completion and peroxisome degradation. Tethers the edge of the isolation membrane (IM) to the endoplasmic reticulum (ER) and mediates direct lipid transfer from ER to IM for IM expansion. Atg2 binds to the ER exit site (ERES), which is the membrane source for autophagosome formation, using basic residues in its N-terminal region (NR) and to the expanding edge of the IM through its C-terminal region. The latter binding is assisted by an atg18-PtdIns3P interaction. Atg2 then extracts phospholipids from the membrane source using its NR and transfers them to atg9 to the IM through its predicted beta-sheet-rich structure for membrane expansion. In Aspergillus oryzae (strain ATCC 42149 / RIB 40) (Yellow koji mold), this protein is Autophagy-related protein 2 (atg2).